The chain runs to 466 residues: Vimentin (466 aa).

Low complexity-rich tracts occupy residues 1–13 (MSTR…SYRR) and 20–31 (TASRPSSSRSYV). Positions 1-31 (MSTRTVSSSSYRRMFGGPGTASRPSSSRSYV) are disordered. Residue serine 2 is modified to N-acetylserine. Residues 2-95 (STRTVSSSSY…FSLADAINTE (94 aa)) are head. A Phosphoserine; alternate modification is found at serine 7. Serine 7 carries O-linked (GlcNAc) serine; alternate glycosylation. A phosphoserine mark is found at serine 8, serine 9, and serine 10. Threonine 20 carries the phosphothreonine modification. Phosphoserine is present on residues serine 25 and serine 26. Residue threonine 33 is glycosylated (O-linked (GlcNAc) threonine). Serine 34 is a glycosylation site (O-linked (GlcNAc) serine; alternate). At serine 34 the chain carries Phosphoserine; by PKC; alternate. Serine 39 carries the post-translational modification Phosphoserine; by CaMK2, PKA, PKC and ROCK2. Phosphoserine occurs at positions 42, 47, 49, and 51. At tyrosine 53 the chain carries Phosphotyrosine. Serine 55 bears the Phosphoserine mark. Phosphoserine; by CDK5 and CDK1 is present on serine 56. Tyrosine 61 is subject to Phosphotyrosine. Serine 66 carries the post-translational modification Phosphoserine. Serine 72 bears the Phosphoserine; by AURKB and ROCK2 mark. Serine 73 and serine 87 each carry phosphoserine. The tract at residues 96–131 (FKNTRTNEKVELQELNDRFANYIDKVRFLEQQNKIL) is coil 1A. Positions 96-131 (FKNTRTNEKVELQELNDRFANYIDKVRFLEQQNKIL) form a coiled coil. The 309-residue stretch at 103-411 (EKVELQELND…KLLEGEESRI (309 aa)) folds into the IF rod domain. Lysine 104 is covalently cross-linked (Glycyl lysine isopeptide (Lys-Gly) (interchain with G-Cter in SUMO2)). Position 117 is a phosphotyrosine (tyrosine 117). Residues lysine 120, lysine 129, and lysine 139 each carry the N6-acetyllysine; alternate modification. N6-succinyllysine; alternate is present on residues lysine 120 and lysine 129. Glycyl lysine isopeptide (Lys-Gly) (interchain with G-Cter in SUMO2); alternate cross-links involve residues lysine 120, lysine 129, and lysine 139. The interval 132–153 (LAELEQLKGQGKSRLGDLYEEE) is linker 1. Residue serine 144 is modified to Phosphoserine. A coiled-coil region spans residues 154-245 (MRELRRQVDQ…KLHDEEIQEL (92 aa)). Positions 154–245 (MRELRRQVDQ…KLHDEEIQEL (92 aa)) are coil 1B. Position 168 is an N6-acetyllysine (lysine 168). An N6-acetyllysine; alternate modification is found at lysine 188. Position 188 is an N6-succinyllysine; alternate (lysine 188). At serine 214 the chain carries Phosphoserine. Lysine 223 carries the post-translational modification N6-acetyllysine; alternate. Lysine 223 is covalently cross-linked (Glycyl lysine isopeptide (Lys-Gly) (interchain with G-Cter in SUMO2); alternate). Serine 226 bears the Phosphoserine mark. Lysine 235 is modified (N6-acetyllysine). Residues 246 to 268 (QAQIQEQHVQIDMDVSKPDLTAA) form a linker 12 region. Residue lysine 262 forms a Glycyl lysine isopeptide (Lys-Gly) (interchain with G-Cter in SUMO2) linkage. The segment at 269–407 (LRDVRQQYES…ATYRKLLEGE (139 aa)) is coil 2. Lysine 294 is subject to N6-acetyllysine; alternate. Lysine 294 is modified (N6-succinyllysine; alternate). A Glycyl lysine isopeptide (Lys-Gly) (interchain with G-Cter in SUMO2); alternate cross-link involves residue lysine 294. Serine 299 is modified (phosphoserine). Residues 303–407 (NRNNDALRQA…ATYRKLLEGE (105 aa)) adopt a coiled-coil conformation. A Glycyl lysine isopeptide (Lys-Gly) (interchain with G-Cter in SUMO2) cross-link involves residue lysine 313. Serine 325 carries the phosphoserine modification. A [IL]-x-C-x-x-[DE] motif motif is present at residues 326-329 (LTCE). Lysine 373 bears the N6-acetyllysine; alternate mark. Lysine 373 participates in a covalent cross-link: Glycyl lysine isopeptide (Lys-Gly) (interchain with G-Cter in SUMO2); alternate. The segment at 408–466 (ESRISLPLPNFSSLNLRETNLESLPLVDTHSKRTLLIKTVETRDGQVINETSQHHDDLE) is tail. 4 positions are modified to phosphoserine: serine 409, serine 412, serine 419, and serine 420. The residue at position 426 (threonine 426) is a Phosphothreonine. Serine 430 carries the phosphoserine modification. Threonine 436 carries the post-translational modification Phosphothreonine. The residue at position 438 (serine 438) is a Phosphoserine. Residue lysine 439 forms a Glycyl lysine isopeptide (Lys-Gly) (interchain with G-Cter in SUMO2) linkage. Lysine 445 carries the N6-acetyllysine; alternate modification. Lysine 445 bears the N6-succinyllysine; alternate mark. Lysine 445 participates in a covalent cross-link: Glycyl lysine isopeptide (Lys-Gly) (interchain with G-Cter in SUMO2); alternate. A Glycyl lysine isopeptide (Lys-Gly) (interchain with G-Cter in SUMO1); alternate cross-link involves residue lysine 445. Phosphothreonine occurs at positions 446 and 458. Serine 459 is subject to Phosphoserine.

Belongs to the intermediate filament family. In terms of assembly, homomer assembled from elementary dimers. Identified in complexes that contain VIM, EZR, AHNAK, BFSP1, BFSP2, ANK2, PLEC, PRX and spectrin. Interacts with BCAS3. Interacts with LGSN. Interacts with SYNM. Interacts (via rod region) with PLEC (via CH 1 domain). Interacts with STK33. Interacts with LARP6. Interacts with RAB8B. Interacts with TOR1A; the interaction associates TOR1A with the cytoskeleton. Interacts with TOR1AIP1. Interacts with TOR1AIP1. Interacts with DIAPH1. Interacts with EPPK1; interaction is dependent of higher-order structure of intermediate filament. Interacts with the non-receptor tyrosine kinase SRMS; the interaction leads to phosphorylation of VIM. Interacts with NOD2. Interacts (via head region) with CORO1C. Interacts with HDGF. Interacts with PRKCE (via phorbol-ester/DAG-type 2 domain). Interacts with BFSP2. Interacts with PPL. Interacts with PKP1 and PKP2. Interacts with SCRIB (via PDZ domains); the interaction protects SCRIB from proteasomal degradation and facilitates SCRIB localization to intermediate filaments, the interaction is reduced by cell contact inhibition. In terms of processing, one of the most prominent phosphoproteins in various cells of mesenchymal origin. Phosphorylation is enhanced during cell division, at which time vimentin filaments are significantly reorganized. Phosphorylation by PKN1 inhibits the formation of filaments. Filament disassembly during mitosis is promoted by phosphorylation at Ser-55 as well as by nestin. Phosphorylated at Ser-56 by CDK5 during neutrophil secretion in the cytoplasm. Phosphorylated by STK33. Phosphorylated on tyrosine residues by SRMS. Post-translationally, S-nitrosylation is induced by interferon-gamma and oxidatively-modified low-densitity lipoprotein (LDL(ox)) possibly implicating the iNOS-S100A8/9 transnitrosylase complex.

It is found in the cytoplasm. It localises to the cytoskeleton. Its subcellular location is the nucleus matrix. The protein localises to the cell membrane. In terms of biological role, vimentins are class-III intermediate filaments found in various non-epithelial cells, especially mesenchymal cells. Vimentin is attached to the nucleus, endoplasmic reticulum, and mitochondria, either laterally or terminally. Plays a role in cell directional movement, orientation, cell sheet organization and Golgi complex polarization at the cell migration front. Protects SCRIB from proteasomal degradation and facilitates its localization to intermediate filaments in a cell contact-mediated manner. Its function is as follows. Involved with LARP6 in the stabilization of type I collagen mRNAs for CO1A1 and CO1A2. In Sus scrofa (Pig), this protein is Vimentin (VIM).